Consider the following 151-residue polypeptide: Transcription antitermination protein NusB (151 aa).

Belongs to the NusB family.

Its function is as follows. Involved in transcription antitermination. Required for transcription of ribosomal RNA (rRNA) genes. Binds specifically to the boxA antiterminator sequence of the ribosomal RNA (rrn) operons. The protein is Transcription antitermination protein NusB of Thermus thermophilus (strain ATCC BAA-163 / DSM 7039 / HB27).